Reading from the N-terminus, the 156-residue chain is Small ribosomal subunit protein uS7 (156 aa).

Belongs to the universal ribosomal protein uS7 family. As to quaternary structure, part of the 30S ribosomal subunit. Contacts proteins S9 and S11.

Its function is as follows. One of the primary rRNA binding proteins, it binds directly to 16S rRNA where it nucleates assembly of the head domain of the 30S subunit. Is located at the subunit interface close to the decoding center, probably blocks exit of the E-site tRNA. The polypeptide is Small ribosomal subunit protein uS7 (Methylobacterium radiotolerans (strain ATCC 27329 / DSM 1819 / JCM 2831 / NBRC 15690 / NCIMB 10815 / 0-1)).